We begin with the raw amino-acid sequence, 251 residues long: Ubiquinone/menaquinone biosynthesis C-methyltransferase UbiE (251 aa).

Residues T74, D95, 123–124 (NA), and S140 each bind S-adenosyl-L-methionine.

Belongs to the class I-like SAM-binding methyltransferase superfamily. MenG/UbiE family.

The catalysed reaction is a 2-demethylmenaquinol + S-adenosyl-L-methionine = a menaquinol + S-adenosyl-L-homocysteine + H(+). It catalyses the reaction a 2-methoxy-6-(all-trans-polyprenyl)benzene-1,4-diol + S-adenosyl-L-methionine = a 5-methoxy-2-methyl-3-(all-trans-polyprenyl)benzene-1,4-diol + S-adenosyl-L-homocysteine + H(+). It functions in the pathway quinol/quinone metabolism; menaquinone biosynthesis; menaquinol from 1,4-dihydroxy-2-naphthoate: step 2/2. Its pathway is cofactor biosynthesis; ubiquinone biosynthesis. In terms of biological role, methyltransferase required for the conversion of demethylmenaquinol (DMKH2) to menaquinol (MKH2) and the conversion of 2-polyprenyl-6-methoxy-1,4-benzoquinol (DDMQH2) to 2-polyprenyl-3-methyl-6-methoxy-1,4-benzoquinol (DMQH2). This Salmonella arizonae (strain ATCC BAA-731 / CDC346-86 / RSK2980) protein is Ubiquinone/menaquinone biosynthesis C-methyltransferase UbiE.